We begin with the raw amino-acid sequence, 101 residues long: NAD(P)H-quinone oxidoreductase subunit 4L (101 aa).

The next 3 helical transmembrane spans lie at 3–23 (LRYF…GLIT), 30–50 (VLMS…AFSN), and 64–84 (VFVI…VLAI).

It belongs to the complex I subunit 4L family. As to quaternary structure, NDH-1 can be composed of about 15 different subunits; different subcomplexes with different compositions have been identified which probably have different functions.

It localises to the cellular thylakoid membrane. The enzyme catalyses a plastoquinone + NADH + (n+1) H(+)(in) = a plastoquinol + NAD(+) + n H(+)(out). The catalysed reaction is a plastoquinone + NADPH + (n+1) H(+)(in) = a plastoquinol + NADP(+) + n H(+)(out). NDH-1 shuttles electrons from an unknown electron donor, via FMN and iron-sulfur (Fe-S) centers, to quinones in the respiratory and/or the photosynthetic chain. The immediate electron acceptor for the enzyme in this species is believed to be plastoquinone. Couples the redox reaction to proton translocation, and thus conserves the redox energy in a proton gradient. Cyanobacterial NDH-1 also plays a role in inorganic carbon-concentration. This Nostoc sp. (strain PCC 7120 / SAG 25.82 / UTEX 2576) protein is NAD(P)H-quinone oxidoreductase subunit 4L.